Reading from the N-terminus, the 547-residue chain is Chaperonin GroEL (547 aa).

ATP is bound by residues 29-32, K50, 86-90, G414, 477-479, and D493; these read TMGP, DGTTT, and NAA.

It belongs to the chaperonin (HSP60) family. As to quaternary structure, forms a cylinder of 14 subunits composed of two heptameric rings stacked back-to-back. Interacts with the co-chaperonin GroES.

It localises to the cytoplasm. It catalyses the reaction ATP + H2O + a folded polypeptide = ADP + phosphate + an unfolded polypeptide.. Functionally, together with its co-chaperonin GroES, plays an essential role in assisting protein folding. The GroEL-GroES system forms a nano-cage that allows encapsulation of the non-native substrate proteins and provides a physical environment optimized to promote and accelerate protein folding. The protein is Chaperonin GroEL of Campylobacter rectus (Wolinella recta).